A 638-amino-acid polypeptide reads, in one-letter code: Leucine-rich repeat-containing protein 63 (638 aa).

2 disordered regions span residues 220–241 (VPST…PSAA) and 306–325 (TTAA…TVQR). 6 LRR repeats span residues 389-412 (AFQL…ILYL), 413-435 (QNLQ…IHLL), 437-458 (YLRI…LFCL), 460-481 (YLEE…IQKL), 482-504 (RSLE…ILKL), and 532-556 (LTQI…VRKS).

This Mus musculus (Mouse) protein is Leucine-rich repeat-containing protein 63.